The following is a 778-amino-acid chain: E3 UFM1-protein ligase 1 homolog (778 aa).

The interval 404 to 477 (NNLSTSHDAD…TVQQSAGNTR (74 aa)) is disordered. Positions 445–457 (KSTKKHQRGRAAA) are enriched in basic residues.

The protein belongs to the UFL1 family.

In terms of biological role, E3 UFM1-protein ligase that mediates ufmylation of target proteins. The chain is E3 UFM1-protein ligase 1 homolog from Drosophila virilis (Fruit fly).